The primary structure comprises 78 residues: Mitochondrial import inner membrane translocase subunit Tim9 (78 aa).

The Twin CX3C motif motif lies at 24–48 (CFTSCVNEFGSRTVNAKEESCANNC). 2 cysteine pairs are disulfide-bonded: Cys24/Cys48 and Cys28/Cys44.

Belongs to the small Tim family. Heterohexamer; composed of 3 copies of tim-9/tin-9.1 and 3 copies of tim-10/tin-10, named soluble 70 kDa complex. The complex associates with the tim-22 component of the TIM22 complex. Interacts with multi-pass transmembrane proteins in transit.

The protein resides in the mitochondrion inner membrane. Mitochondrial intermembrane chaperone that participates in the import and insertion of multi-pass transmembrane proteins into the mitochondrial inner membrane. May also be required for the transfer of beta-barrel precursors from the TOM complex to the sorting and assembly machinery (SAM complex) of the outer membrane. Acts as a chaperone-like protein that protects the hydrophobic precursors from aggregation and guide them through the mitochondrial intermembrane space. This Caenorhabditis briggsae protein is Mitochondrial import inner membrane translocase subunit Tim9 (tin-9.1).